A 426-amino-acid polypeptide reads, in one-letter code: C2H2 type master regulator of conidiophore development brlA (426 aa).

2 disordered regions span residues 25–71 and 281–302; these read CPSM…DRGT and GVRLQRQPSRKMARKQPSKQSL. Positions 30 to 44 are enriched in low complexity; it reads SSFSPLESPTPTPTS. The span at 45-58 shows a compositional bias: polar residues; it reads IYSQGSLASPSWPE. Over residues 288–297 the composition is skewed to basic residues; it reads PSRKMARKQP. C2H2-type zinc fingers lie at residues 316–340 and 346–371; these read FKCKEPGCKGRFKRQEHLKRHMKSH and HVCWVPGCHRAFSRSDNLNAHYTKTH. Residues 384-426 form a disordered region; the sequence is LDETSPDYNPDYRGPLTADGRPMPGGTLDESMPSREISMEWDE.

It is found in the nucleus. BrlA, abaA and wetA are pivotal regulators of conidiophore development and conidium maturation. They act individually and together to regulate their own expression and that of numerous other sporulation-specific genes. Binds promoters of target genes at brlA response elements (BREs) containing the conserved sequence 5'-(C/A)(A/G)AGGG(G/A)-3'. Positively regulates expression of the gliotoxin biosynthetic gene cluster in actively growing vegetative cells, and likely bridges morphological and chemical development during the life-cycle. Regulates (directly or indirectly) the ergot cluster genes. Positively regulates expression of the fumiquinazoline C biosynthetic gene cluster. Positively regulates expression of the melanin biosynthetic gene cluster. Mediates repression of ribosomal protein gene expression in response to nitrogen depletion. The protein is C2H2 type master regulator of conidiophore development brlA of Aspergillus fumigatus (strain ATCC MYA-4609 / CBS 101355 / FGSC A1100 / Af293) (Neosartorya fumigata).